Reading from the N-terminus, the 280-residue chain is 2-dehydro-3-deoxyphosphooctonate aldolase 2 (280 aa).

The protein belongs to the KdsA family.

The protein localises to the cytoplasm. It carries out the reaction D-arabinose 5-phosphate + phosphoenolpyruvate + H2O = 3-deoxy-alpha-D-manno-2-octulosonate-8-phosphate + phosphate. The protein operates within carbohydrate biosynthesis; 3-deoxy-D-manno-octulosonate biosynthesis; 3-deoxy-D-manno-octulosonate from D-ribulose 5-phosphate: step 2/3. It functions in the pathway bacterial outer membrane biogenesis; lipopolysaccharide biosynthesis. This Pseudomonas putida (strain ATCC 47054 / DSM 6125 / CFBP 8728 / NCIMB 11950 / KT2440) protein is 2-dehydro-3-deoxyphosphooctonate aldolase 2 (kdsA2).